Consider the following 325-residue polypeptide: Ribosomal RNA small subunit methyltransferase H (325 aa).

S-adenosyl-L-methionine-binding positions include 42-44 (GGH), D62, F86, D105, and Q112.

The protein belongs to the methyltransferase superfamily. RsmH family.

The protein resides in the cytoplasm. It carries out the reaction cytidine(1402) in 16S rRNA + S-adenosyl-L-methionine = N(4)-methylcytidine(1402) in 16S rRNA + S-adenosyl-L-homocysteine + H(+). In terms of biological role, specifically methylates the N4 position of cytidine in position 1402 (C1402) of 16S rRNA. The protein is Ribosomal RNA small subunit methyltransferase H of Cupriavidus metallidurans (strain ATCC 43123 / DSM 2839 / NBRC 102507 / CH34) (Ralstonia metallidurans).